Reading from the N-terminus, the 155-residue chain is Ribosome-binding factor A (155 aa).

This sequence belongs to the RbfA family. In terms of assembly, monomer. Binds 30S ribosomal subunits, but not 50S ribosomal subunits or 70S ribosomes.

Its subcellular location is the cytoplasm. Its function is as follows. One of several proteins that assist in the late maturation steps of the functional core of the 30S ribosomal subunit. Associates with free 30S ribosomal subunits (but not with 30S subunits that are part of 70S ribosomes or polysomes). Required for efficient processing of 16S rRNA. May interact with the 5'-terminal helix region of 16S rRNA. The protein is Ribosome-binding factor A of Methylocella silvestris (strain DSM 15510 / CIP 108128 / LMG 27833 / NCIMB 13906 / BL2).